The following is a 586-amino-acid chain: MDRNTLIGLVLIALIMMAWFQLMAPKKPLPEEKAQQERLEAVAESIDIKNQLVQDSLQKANPTQKFGELGQFAVGEEKKIQIETDLFTATLSTKGATLRSFIQKDYLNYKHEPFNLISNEDGTLSLFFATRDGKVVNTGELYFDPKTDQKNFRISGDNKVRIPFEISTEDGRRIEITYIFSGNSYEFGYETNLAGFGKFVSGNEYQVVWTGGLSNAEKNVNDEATNSYAEAYLGGSTLRLDASHVDETYKEQPSGNAKWVAVRSKYFVAGLISKEETEGVFMEGSRNTNDEKSVFEDYMVALKLKLPSDQTTVNSRFSVYIGPLKYDLVKATGSELEKIIDFGWEWVTRPFAEYLIIPIFNFLNNHVDSYGVIIILFALFIKLVTYPLTMASTKSMKKMAALQPQLKAIQEQYKDNPEKLQAEISGIYREAGVNPLGGCLPTVIQMPLLFAMFYVFRSSIQLRQEGFLWSNDLSVPDSILDLPFSIPLYGDHVSVIPILMGVAVFFQQKLTPSTQTNDQMKFMMYLFPGMMLIFFNNMPSGLGLYYLMFNVFSIAQQFYINQTTETEPVVLKDKSKQKAKPARKKK.

A run of 5 helical transmembrane segments spans residues 5-25, 371-391, 436-456, 486-506, and 522-542; these read TLIG…LMAP, GVII…LTMA, LGGC…FYVF, IPLY…AVFF, and FMMY…PSGL.

This sequence belongs to the OXA1/ALB3/YidC family. Type 1 subfamily. Interacts with the Sec translocase complex via SecD. Specifically interacts with transmembrane segments of nascent integral membrane proteins during membrane integration.

The protein resides in the cell inner membrane. Required for the insertion and/or proper folding and/or complex formation of integral membrane proteins into the membrane. Involved in integration of membrane proteins that insert both dependently and independently of the Sec translocase complex, as well as at least some lipoproteins. Aids folding of multispanning membrane proteins. The chain is Membrane protein insertase YidC from Chloroherpeton thalassium (strain ATCC 35110 / GB-78).